The chain runs to 992 residues: Probable RNA-dependent RNA polymerase 3 (992 aa).

Positions 88 to 113 (PRLSPGESPVQSPRTPAKKSCRASQD) are disordered.

It belongs to the RdRP family.

The enzyme catalyses RNA(n) + a ribonucleoside 5'-triphosphate = RNA(n+1) + diphosphate. Its function is as follows. Probably involved in the RNA silencing pathway and required for the generation of small interfering RNAs (siRNAs). The chain is Probable RNA-dependent RNA polymerase 3 (RDR3) from Arabidopsis thaliana (Mouse-ear cress).